The chain runs to 198 residues: NAD(P)H dehydrogenase (quinone) (198 aa).

Residues 4–189 (VLVLYYSMYG…SIARYQGEYV (186 aa)) enclose the Flavodoxin-like domain. FMN is bound by residues 10–15 (SMYGHI) and 78–80 (TRF). An NAD(+)-binding site is contributed by Y12. W98 contributes to the substrate binding site. FMN contacts are provided by residues 113–118 (STGTGG) and H133.

The protein belongs to the WrbA family. The cofactor is FMN.

The enzyme catalyses a quinone + NADH + H(+) = a quinol + NAD(+). It catalyses the reaction a quinone + NADPH + H(+) = a quinol + NADP(+). The protein is NAD(P)H dehydrogenase (quinone) of Shigella dysenteriae serotype 1 (strain Sd197).